The following is a 491-amino-acid chain: MGQIVTFFQEVPHIIEEVMNIVLITLSLLAILKGIYNVMTCGLIGLLTFLFLCGKSCSTIYKDNYRLMQLNLDMSGLNATMPLSCSKNNSHHYIQVFNTTGLELTLTNDSLIGHKWCNLSDAHKKDTYDHTLMSIISTFHLSIPNFNHYEAMACDFNGGKISIQYNLSHSSETDAMNHCGTVANGVLEVFRRMTWCTHCDTPLGASIAGFNCVRTSYKYLIIQNTTWEDHCTMSRPSPMGYLSLLSQRAREIYISRRLMGTFTWTLSDSEGNDLPGGYCLQRWMLIEAEMKCFGNTAVAKCNQQHDEEFCDMLRLFDFNKEAIHRLRVEAEKSISLINKAVNSLINDQLIMRNHLRDIMGIPYCNYSRFWYLNDTRSGRTSLPKCWMVSNGSYLNETHFSSDIEQEANNMITEMLRKEYERRQGTTPLGLVDLFVFSTSFYLISVFLHLIKIPTHRHLVGKPCPKPHRLNHMGVCSCGLYKQPGLPTKWKR.

Gly-2 carries the N-myristoyl glycine; by host lipid modification. Residues Gly-2–Glu-17 are Extracellular-facing. The helical transmembrane segment at Val-18–Lys-33 threads the bilayer. The Cytoplasmic portion of the chain corresponds to Gly-34–Ser-58. Position 57 (Cys-57) interacts with Zn(2+). The Extracellular segment spans residues Thr-59–Asp-432. 6 N-linked (GlcNAc...) asparagine; by host glycosylation sites follow: Asn-78, Asn-88, Asn-98, Asn-108, Asn-118, and Asn-166. 6 disulfides stabilise this stretch: Cys-85-Cys-231, Cys-117-Cys-154, Cys-179-Cys-212, Cys-279-Cys-292, Cys-301-Cys-310, and Cys-364-Cys-385. A glycan (N-linked (GlcNAc...) asparagine; by host) is linked at Asn-224. Asn-365, Asn-373, Asn-390, and Asn-395 each carry an N-linked (GlcNAc...) asparagine; by host glycan. A helical transmembrane segment spans residues Leu-433–Pro-453. The Cytoplasmic portion of the chain corresponds to Thr-454–Arg-491. 6 residues coordinate Zn(2+): His-455, His-457, Cys-463, His-467, Cys-475, and Cys-477.

Belongs to the arenaviridae GPC protein family. Interacts with glycoprotein G2. Part of the GP complex (GP-C) together with glycoprotein G1 and glycoprotein G2. The GP-complex interacts with protein Z, which interacts with ribonucleocapsid; these interactions may induce virion budding. In terms of assembly, homotrimer; disulfide-linked. In pre-fusion state, G1 homotrimers bind G2 homotrimers via ionic interactions. Part of the GP complex (GP-C) together with glycoprotein G2 and the stable signal peptide. The GP-complex interacts with protein Z, which interacts with ribonucleocapsid; these interactions may induce virion budding. As to quaternary structure, homotrimer. Interacts with the stable signal peptide. In pre-fusion state, G2 homotrimers bind G1 homotrimers via ionic interactions. Part of the GP complex (GP-C) together with glycoprotein G1 and the stable signal peptide. Acidification in the endosome triggers rearrangements, which ultimately leads to a 6 helix bundle formed by the two heptad repeat domains (HR1 and HR2) in post-fusion state. The GP-complex interacts with protein Z, which interacts with ribonucleocapsid; these interactions may induce virion budding. Specific enzymatic cleavages in vivo yield mature proteins. GP-C polyprotein is cleaved in the endoplasmic reticulum by the host protease MBTPS1. Only cleaved glycoprotein is incorporated into virions. Post-translationally, the SSP remains stably associated with the GP complex following cleavage by signal peptidase and plays crucial roles in the trafficking of GP through the secretory pathway. In terms of processing, myristoylation is necessary for GP2-mediated fusion activity.

The protein localises to the virion membrane. The protein resides in the host endoplasmic reticulum membrane. Its subcellular location is the host Golgi apparatus membrane. It localises to the host cell membrane. Functionally, functions as a cleaved signal peptide that is retained as the third component of the GP complex (GP-C). Helps to stabilize the spike complex in its native conformation. The SSP is required for efficient glycoprotein expression, post-translational maturation cleavage of G1 and G2, glycoprotein transport to the cell surface plasma membrane, formation of infectious virus particles, and acid pH-dependent glycoprotein-mediated cell fusion. Forms the virion spikes together with glycoprotein G2. The glycoprotein spike trimers are connected to the underlying matrix. Mediates virus attachment to host receptor alpha-dystroglycan DAG1. This attachment induces virion internalization predominantly through clathrin- and caveolin-independent endocytosis. Its function is as follows. Forms the virion spikes together with glycoprotein G1. The glycoprotein spike trimers are connected to the underlying matrix. Class I viral fusion protein that directs fusion of viral and host endosomal membranes, leading to delivery of the nucleocapsid into the cytoplasm. Membrane fusion is mediated by irreversible conformational changes induced by acidification. The protein is Pre-glycoprotein polyprotein GP complex of Mobala mammarenavirus (isolate Rat/Central African Republic/Acar 3080/1983) (MOBV).